Here is a 338-residue protein sequence, read N- to C-terminus: Ribosomal RNA small subunit methyltransferase H (338 aa).

S-adenosyl-L-methionine is bound by residues 53–55 (GGH), Asp72, Tyr99, Asp123, and Gln130. The disordered stretch occupies residues 277-298 (ITPRSKSKSPEGLPVELPGMGP).

Belongs to the methyltransferase superfamily. RsmH family.

The protein resides in the cytoplasm. It catalyses the reaction cytidine(1402) in 16S rRNA + S-adenosyl-L-methionine = N(4)-methylcytidine(1402) in 16S rRNA + S-adenosyl-L-homocysteine + H(+). Specifically methylates the N4 position of cytidine in position 1402 (C1402) of 16S rRNA. The polypeptide is Ribosomal RNA small subunit methyltransferase H (Rhodococcus opacus (strain B4)).